Reading from the N-terminus, the 453-residue chain is Cytochrome b-c1 complex subunit 2, mitochondrial (453 aa).

Residues 1-14 (MKLLTRAGSLSRFY) constitute a mitochondrion transit peptide. N6-acetyllysine is present on residues K66, K199, and K250.

This sequence belongs to the peptidase M16 family. UQCRC2/QCR2 subfamily. In terms of assembly, component of the ubiquinol-cytochrome c oxidoreductase (cytochrome b-c1 complex, complex III, CIII), a multisubunit enzyme composed of 11 subunits. The complex is composed of 3 respiratory subunits cytochrome b, cytochrome c1 and Rieske protein UQCRFS1, 2 core protein subunits UQCRC1/QCR1 and UQCRC2/QCR2, and 6 low-molecular weight protein subunits UQCRH/QCR6, UQCRB/QCR7, UQCRQ/QCR8, UQCR10/QCR9, UQCR11/QCR10 and subunit 9, the cleavage product of Rieske protein UQCRFS1. The complex exists as an obligatory dimer and forms supercomplexes (SCs) in the inner mitochondrial membrane with NADH-ubiquinone oxidoreductase (complex I, CI) and cytochrome c oxidase (complex IV, CIV), resulting in different assemblies (supercomplex SCI(1)III(2)IV(1) and megacomplex MCI(2)III(2)IV(2)). Interacts with RAB5IF. Interacts with STMP1.

The protein localises to the mitochondrion inner membrane. Component of the ubiquinol-cytochrome c oxidoreductase, a multisubunit transmembrane complex that is part of the mitochondrial electron transport chain which drives oxidative phosphorylation. The respiratory chain contains 3 multisubunit complexes succinate dehydrogenase (complex II, CII), ubiquinol-cytochrome c oxidoreductase (cytochrome b-c1 complex, complex III, CIII) and cytochrome c oxidase (complex IV, CIV), that cooperate to transfer electrons derived from NADH and succinate to molecular oxygen, creating an electrochemical gradient over the inner membrane that drives transmembrane transport and the ATP synthase. The cytochrome b-c1 complex catalyzes electron transfer from ubiquinol to cytochrome c, linking this redox reaction to translocation of protons across the mitochondrial inner membrane, with protons being carried across the membrane as hydrogens on the quinol. In the process called Q cycle, 2 protons are consumed from the matrix, 4 protons are released into the intermembrane space and 2 electrons are passed to cytochrome c. The 2 core subunits UQCRC1/QCR1 and UQCRC2/QCR2 are homologous to the 2 mitochondrial-processing peptidase (MPP) subunits beta-MPP and alpha-MPP respectively, and they seem to have preserved their MPP processing properties. May be involved in the in situ processing of UQCRFS1 into the mature Rieske protein and its mitochondrial targeting sequence (MTS)/subunit 9 when incorporated into complex III. The sequence is that of Cytochrome b-c1 complex subunit 2, mitochondrial (UQCRC2) from Bos taurus (Bovine).